The chain runs to 566 residues: Pentatricopeptide repeat-containing protein At4g11690 (566 aa).

PPR repeat units follow at residues 93–127 (KFRL…GFVP), 128–158 (GSNC…NKSK), 162–196 (DVYS…GFSP), 197–231 (NVVI…GLVA), 232–266 (NERT…GVFP), 267–301 (NLYT…GVSC), 302–336 (NIVT…GINP), 337–371 (NLIT…GLSP), 372–406 (SLVT…GIKP), 407–441 (SKVT…GLVP), 442–476 (DVHT…NCEP), 477–511 (NEVI…ELAP), and 512–546 (NVAS…GIDP).

Belongs to the PPR family. P subfamily.

In Arabidopsis thaliana (Mouse-ear cress), this protein is Pentatricopeptide repeat-containing protein At4g11690.